The primary structure comprises 223 residues: Phosphoribosylformylglycinamidine synthase subunit PurQ (223 aa).

One can recognise a Glutamine amidotransferase type-1 domain in the interval 4–223 (FAVVVFPGTN…FRSMVEWARK (220 aa)). Residue Cys-85 is the Nucleophile of the active site. Catalysis depends on residues His-196 and Glu-198.

Part of the FGAM synthase complex composed of 1 PurL, 1 PurQ and 2 PurS subunits.

The protein localises to the cytoplasm. The catalysed reaction is N(2)-formyl-N(1)-(5-phospho-beta-D-ribosyl)glycinamide + L-glutamine + ATP + H2O = 2-formamido-N(1)-(5-O-phospho-beta-D-ribosyl)acetamidine + L-glutamate + ADP + phosphate + H(+). It carries out the reaction L-glutamine + H2O = L-glutamate + NH4(+). It participates in purine metabolism; IMP biosynthesis via de novo pathway; 5-amino-1-(5-phospho-D-ribosyl)imidazole from N(2)-formyl-N(1)-(5-phospho-D-ribosyl)glycinamide: step 1/2. Part of the phosphoribosylformylglycinamidine synthase complex involved in the purines biosynthetic pathway. Catalyzes the ATP-dependent conversion of formylglycinamide ribonucleotide (FGAR) and glutamine to yield formylglycinamidine ribonucleotide (FGAM) and glutamate. The FGAM synthase complex is composed of three subunits. PurQ produces an ammonia molecule by converting glutamine to glutamate. PurL transfers the ammonia molecule to FGAR to form FGAM in an ATP-dependent manner. PurS interacts with PurQ and PurL and is thought to assist in the transfer of the ammonia molecule from PurQ to PurL. The sequence is that of Phosphoribosylformylglycinamidine synthase subunit PurQ from Thermococcus kodakarensis (strain ATCC BAA-918 / JCM 12380 / KOD1) (Pyrococcus kodakaraensis (strain KOD1)).